Reading from the N-terminus, the 140-residue chain is Putative nickel-responsive regulator (140 aa).

Residues histidine 81, histidine 92, histidine 94, and cysteine 100 each contribute to the Ni(2+) site.

This sequence belongs to the transcriptional regulatory CopG/NikR family. Ni(2+) serves as cofactor.

Its function is as follows. Transcriptional regulator. The chain is Putative nickel-responsive regulator from Methanocella arvoryzae (strain DSM 22066 / NBRC 105507 / MRE50).